Consider the following 212-residue polypeptide: ATP phosphoribosyltransferase (212 aa).

The protein belongs to the ATP phosphoribosyltransferase family. Short subfamily. As to quaternary structure, heteromultimer composed of HisG and HisZ subunits.

Its subcellular location is the cytoplasm. The enzyme catalyses 1-(5-phospho-beta-D-ribosyl)-ATP + diphosphate = 5-phospho-alpha-D-ribose 1-diphosphate + ATP. It participates in amino-acid biosynthesis; L-histidine biosynthesis; L-histidine from 5-phospho-alpha-D-ribose 1-diphosphate: step 1/9. Its function is as follows. Catalyzes the condensation of ATP and 5-phosphoribose 1-diphosphate to form N'-(5'-phosphoribosyl)-ATP (PR-ATP). Has a crucial role in the pathway because the rate of histidine biosynthesis seems to be controlled primarily by regulation of HisG enzymatic activity. The protein is ATP phosphoribosyltransferase of Prochlorococcus marinus (strain AS9601).